Consider the following 159-residue polypeptide: MSRFRILSVGRGMPKHEKGLFDDYAGRMKRYGGLELVEIAEGQRTGKESPATRSKAIADEGERILEKMDKRLWMALDRGGKLLDSETLAAQLLRWQEAGDRDVGLIIGGPDGLHERVLQGVAFKLAFGPMTFPHMLVRVMLAEQLYRAMTLQHGVPYHR.

S-adenosyl-L-methionine is bound by residues glycine 108 and 127 to 132 (FGPMTF).

It belongs to the RNA methyltransferase RlmH family. Homodimer.

Its subcellular location is the cytoplasm. It catalyses the reaction pseudouridine(1915) in 23S rRNA + S-adenosyl-L-methionine = N(3)-methylpseudouridine(1915) in 23S rRNA + S-adenosyl-L-homocysteine + H(+). In terms of biological role, specifically methylates the pseudouridine at position 1915 (m3Psi1915) in 23S rRNA. This Magnetococcus marinus (strain ATCC BAA-1437 / JCM 17883 / MC-1) protein is Ribosomal RNA large subunit methyltransferase H.